A 363-amino-acid chain; its full sequence is SWIRM domain-containing protein YOR338W (363 aa).

Disordered stretches follow at residues 1-22 (MLDN…GGIN) and 186-208 (LYED…VPVR). The segment covering 186-196 (LYEDDGNRSEN) has biased composition (basic and acidic residues). The SWIRM domain maps to 266 to 363 (LKVEWKGSPM…LQDKHFEKYL (98 aa)).

This Saccharomyces cerevisiae (strain ATCC 204508 / S288c) (Baker's yeast) protein is SWIRM domain-containing protein YOR338W.